Reading from the N-terminus, the 713-residue chain is MLNFFAAAPKGFEYSLAQELTEFGATEIKESVAGVYFTAPLALAYRITLWTRLASRIVLVIYKGPCESAEQLYNAAYCIDWSSHFSNRNTFSIDFHGTGGFINNTQFGALKIKDAIVDRFRDDGDARPNVARIDADIKIDAHFRNGVITIAMNFSGPSLHQRGYRSTTGEAPLKENLAANMLVRSGWKAAPTTLLDPFCGSGTVLIEAALMAADIAPGLQRSRFGFEHWRRHDKATWHEILEEAKARASLGVKRCDVKFYGSDIDSRLVALAKRNAQNAGVLELIDFKVANALNVEPPAGEGYLITNPPYGERLGSVSELLQLYYQLGDKFKKEFGGWKVAMLCSDIELISALKLKADKQMKMFNGALECAFNLYTLHAQSTRRDTPVLPEGVDIADIAPAFANRIKKNAKQLEKWAKKEGIDSYRLYDADIPEYNVAVDRYLDHIVVQEYMAPASIPEAVTKRRLSDVLLALPAAIGVDPHKITMKTRERQKGTNQYQKLDERKLELITTEYGAKFKLNLTGYLDTGLFLDHRLTRRLVGQKSKGRRVLNLFSYTGSASVHAALGGAKSVTTVDMSNTYLAWAKENFALNDLSGKQYEFVQADCLQWIRDSALDKSAQYDLIFIDPPTFSNSKRMEDSFDVQRDHVNLLGMLIKLLSPNGEIVFSNNKRKFKMDTETLAKMKIKVENIDDLTLPMDYKRNPHIHNTWLITHA.

The 112-residue stretch at Leu-43–Phe-154 folds into the THUMP domain.

The protein belongs to the methyltransferase superfamily. RlmKL family.

It is found in the cytoplasm. It catalyses the reaction guanosine(2445) in 23S rRNA + S-adenosyl-L-methionine = N(2)-methylguanosine(2445) in 23S rRNA + S-adenosyl-L-homocysteine + H(+). The catalysed reaction is guanosine(2069) in 23S rRNA + S-adenosyl-L-methionine = N(2)-methylguanosine(2069) in 23S rRNA + S-adenosyl-L-homocysteine + H(+). In terms of biological role, specifically methylates the guanine in position 2445 (m2G2445) and the guanine in position 2069 (m7G2069) of 23S rRNA. In Shewanella sp. (strain MR-4), this protein is Ribosomal RNA large subunit methyltransferase K/L.